The chain runs to 307 residues: Glutaminase (307 aa).

Positions 66, 117, 161, 168, 192, 243, and 261 each coordinate substrate.

The protein belongs to the glutaminase family. As to quaternary structure, homotetramer.

It carries out the reaction L-glutamine + H2O = L-glutamate + NH4(+). In Serratia proteamaculans (strain 568), this protein is Glutaminase.